The sequence spans 82 residues: ATP synthase subunit c, chloroplastic (82 aa).

A run of 2 helical transmembrane segments spans residues 7-27 (AASVIAAGLAVGLAAIGPGIG) and 57-77 (LAFMESLTIYGLVVALSLLFA).

This sequence belongs to the ATPase C chain family. F-type ATPases have 2 components, F(1) - the catalytic core - and F(0) - the membrane proton channel. F(1) has five subunits: alpha(3), beta(3), gamma(1), delta(1), epsilon(1). F(0) has four main subunits: a(1), b(1), b'(1) and c(10-14). The alpha and beta chains form an alternating ring which encloses part of the gamma chain. F(1) is attached to F(0) by a central stalk formed by the gamma and epsilon chains, while a peripheral stalk is formed by the delta, b and b' chains.

The protein resides in the plastid. Its subcellular location is the chloroplast thylakoid membrane. Its function is as follows. F(1)F(0) ATP synthase produces ATP from ADP in the presence of a proton or sodium gradient. F-type ATPases consist of two structural domains, F(1) containing the extramembraneous catalytic core and F(0) containing the membrane proton channel, linked together by a central stalk and a peripheral stalk. During catalysis, ATP synthesis in the catalytic domain of F(1) is coupled via a rotary mechanism of the central stalk subunits to proton translocation. Functionally, key component of the F(0) channel; it plays a direct role in translocation across the membrane. A homomeric c-ring of between 10-14 subunits forms the central stalk rotor element with the F(1) delta and epsilon subunits. The protein is ATP synthase subunit c, chloroplastic of Porphyra purpurea (Red seaweed).